The primary structure comprises 611 residues: 4-hydroxy-3-methylbut-2-en-1-yl diphosphate synthase (flavodoxin) (611 aa).

[4Fe-4S] cluster contacts are provided by C520, C523, C554, and E561.

The protein belongs to the IspG family. [4Fe-4S] cluster serves as cofactor.

The catalysed reaction is (2E)-4-hydroxy-3-methylbut-2-enyl diphosphate + oxidized [flavodoxin] + H2O + 2 H(+) = 2-C-methyl-D-erythritol 2,4-cyclic diphosphate + reduced [flavodoxin]. The protein operates within isoprenoid biosynthesis; isopentenyl diphosphate biosynthesis via DXP pathway; isopentenyl diphosphate from 1-deoxy-D-xylulose 5-phosphate: step 5/6. In terms of biological role, converts 2C-methyl-D-erythritol 2,4-cyclodiphosphate (ME-2,4cPP) into 1-hydroxy-2-methyl-2-(E)-butenyl 4-diphosphate. This Parabacteroides distasonis (strain ATCC 8503 / DSM 20701 / CIP 104284 / JCM 5825 / NCTC 11152) protein is 4-hydroxy-3-methylbut-2-en-1-yl diphosphate synthase (flavodoxin).